We begin with the raw amino-acid sequence, 416 residues long: Serine hydroxymethyltransferase (416 aa).

Residues Leu-121 and 125 to 127 (GHL) each bind (6S)-5,6,7,8-tetrahydrofolate. Lys-230 is subject to N6-(pyridoxal phosphate)lysine. 355-357 (SPF) lines the (6S)-5,6,7,8-tetrahydrofolate pocket.

It belongs to the SHMT family. In terms of assembly, homodimer. The cofactor is pyridoxal 5'-phosphate.

The protein resides in the cytoplasm. The enzyme catalyses (6R)-5,10-methylene-5,6,7,8-tetrahydrofolate + glycine + H2O = (6S)-5,6,7,8-tetrahydrofolate + L-serine. It functions in the pathway one-carbon metabolism; tetrahydrofolate interconversion. The protein operates within amino-acid biosynthesis; glycine biosynthesis; glycine from L-serine: step 1/1. In terms of biological role, catalyzes the reversible interconversion of serine and glycine with tetrahydrofolate (THF) serving as the one-carbon carrier. This reaction serves as the major source of one-carbon groups required for the biosynthesis of purines, thymidylate, methionine, and other important biomolecules. Also exhibits THF-independent aldolase activity toward beta-hydroxyamino acids, producing glycine and aldehydes, via a retro-aldol mechanism. The sequence is that of Serine hydroxymethyltransferase from Streptococcus thermophilus (strain CNRZ 1066).